Reading from the N-terminus, the 622-residue chain is WD repeat-containing protein 70 (622 aa).

Residues 37 to 55 (TAVERSKKTLEAREKEEQI) are compositionally biased toward basic and acidic residues. A disordered region spans residues 37–141 (TAVERSKKTL…DNPVKGIPDS (105 aa)). Residues 67–84 (SSSRQKNTDTSSSSSGSE) show a composition bias toward low complexity. Residues 120-132 (SDDEDEEQHEDDD) are compositionally biased toward acidic residues. 7 WD repeats span residues 148-187 (HGTK…ASLQ), 195-236 (CECH…ECVK), 249-289 (GHTA…KHKG), 298-337 (GKRV…HTKF), 344-383 (TPGT…NPLN), 389-434 (ANYF…KVYE), and 437-476 (VTEA…QRGA). Residues 508–533 (REPRQRSTRKQLEKDRLDPVKSHKPE) are compositionally biased toward basic and acidic residues. Disordered stretches follow at residues 508–549 (REPR…GTHG) and 602–622 (AEVE…KRKI). Over residues 539 to 549 (PGRGGRVGTHG) the composition is skewed to gly residues. Over residues 604–614 (VESDEEETDNE) the composition is skewed to acidic residues.

Belongs to the WD repeat GAD-1 family.

This Xenopus tropicalis (Western clawed frog) protein is WD repeat-containing protein 70 (wdr70).